Reading from the N-terminus, the 627-residue chain is Neuronal acetylcholine receptor subunit alpha-4 (627 aa).

An N-terminal signal peptide occupies residues 1 to 28 (MELGGPGAPRLLPPLLLLLGTGLLRASS). At 29 to 242 (HVETRAHAEE…ITYAFVIRRL (214 aa)) the chain is on the extracellular side. N-linked (GlcNAc...) asparagine glycosylation is present at N57. Positions 76 and 78 each coordinate Ca(2+). Residues N107 and N174 are each glycosylated (N-linked (GlcNAc...) asparagine). 2 cysteine pairs are disulfide-bonded: C161–C175 and C225–C226. A helical transmembrane segment spans residues 243–267 (PLFYTINLIIPCLLISCLTVLVFYL). Residue C271 is the site of S-palmitoyl cysteine attachment. A run of 2 helical transmembrane segments spans residues 275-293 (ITLC…LLIT) and 309-330 (YLLF…VLNV). The Cytoplasmic segment spans residues 331–600 (HHRSPRTHTM…WKYVAMVIDR (270 aa)). Disordered regions lie at residues 382–479 (PRFW…EAVE) and 497–559 (DATS…RHLP). S424, S538, and S541 each carry phosphoserine. Residues 601–619 (IFLWMFIIVCLLGTVGLFL) form a helical membrane-spanning segment.

It belongs to the ligand-gated ion channel (TC 1.A.9) family. Acetylcholine receptor (TC 1.A.9.1) subfamily. Alpha-4/CHRNA4 sub-subfamily. As to quaternary structure, neuronal AChR is composed of two different types of subunits: alpha and beta. CHRNA4 forms heteropentameric neuronal acetylcholine receptors with CHRNB2 and CHRNB4, as well as CHRNA5 and CHRNB3 as accesory subunits. Found in two major stoichiometric forms, LS (low agonist sensitivity): (CHRNA4)3:(CHRNB2)2 and HS (high agonist sensitivity): (CHRNA4)2:(CHRNB2)3, the two stoichiometric forms differ in their unitary conductance, calcium permeability, ACh sensitivity and potentiation by divalent cation. Cells produce predominantly an (CHRNA4)3:(CHRNB2)2 nAChR. The (CHRNA4)2:(CHRNB2)3 expression is selectively up-regulated by nicotine and has lower single channel conductance and calcium permeability. In the striatum, also forms CHRNA4:CHRNA6:CHRNB2 complexes. Also found in the stoichiometric form: (CHRNA4:CHRNB2)2:CHRNB3. Interacts with RIC3; which is required for proper folding and assembly. Interacts with LYPD6.

The protein localises to the synaptic cell membrane. It is found in the cell membrane. The enzyme catalyses Ca(2+)(in) = Ca(2+)(out). It catalyses the reaction K(+)(in) = K(+)(out). It carries out the reaction Na(+)(in) = Na(+)(out). With respect to regulation, activated by a myriad of ligands such as acetylcholine, cytisine, nicotine, choline and epibatidine. Channel potentiation by calcium is stoichiometry-selective, CHRNA4:CHRNB2 nACh receptor is achieved by calcium association with topographically distinct sites framed by anionic residues within the CHRNA4 subunit and between the CHRNA4 and CHRNB2 subunits. nAChR activity is inhibited by the antagonist alpha-conotoxins BuIA, PnIA, GID and MII, small disulfide-constrained peptides from cone snails. Component of neuronal acetylcholine receptors (nAChRs) that function as pentameric, ligand-gated cation channels with high calcium permeability among other activities. nAChRs are excitatory neurotrasnmitter receptors formed by a collection of nAChR subunits known to mediate synaptic transmission in the nervous system and the neuromuscular junction. Each nAchR subunit confers differential attributes to channel properties, including activation, deactivation and desensitization kinetics, pH sensitivity, cation permeability, and binding to allosteric modulators. CHRNA4 forms heteropentameric neuronal acetylcholine receptors with CHRNB2 and CHRNB4, as well as CHRNA5 and CHRNB3 as accesory subunits. Is the most abundant nAChR subtype expressed in the central nervous system. Found in two major stoichiometric forms,(CHRNA4)3:(CHRNB2)2 and (CHRNA4)2:(CHRNB2)3, the two stoichiometric forms differ in their unitary conductance, calcium permeability, ACh sensitivity and potentiation by divalent cation. Involved in the modulation of calcium-dependent signaling pathways, influences the release of neurotransmitters, including dopamine, glutamate and GABA. In Pan troglodytes (Chimpanzee), this protein is Neuronal acetylcholine receptor subunit alpha-4 (CHRNA4).